A 165-amino-acid polypeptide reads, in one-letter code: SPbeta prophage-derived uncharacterized protein YorR (165 aa).

The protein is SPbeta prophage-derived uncharacterized protein YorR (yorR) of Bacillus subtilis (strain 168).